We begin with the raw amino-acid sequence, 96 residues long: Large ribosomal subunit protein bL27 (96 aa).

Positions 1–9 are excised as a propeptide; the sequence is MLRLDLQFF. The disordered stretch occupies residues 1–36; it reads MLRLDLQFFSTKKGQGSSKNGRDSESKRLGSKRADG. Positions 8–19 are enriched in polar residues; that stretch reads FFSTKKGQGSSK. Residues 20 to 35 are compositionally biased toward basic and acidic residues; that stretch reads NGRDSESKRLGSKRAD.

The protein belongs to the bacterial ribosomal protein bL27 family. In terms of processing, the N-terminus is cleaved by ribosomal processing cysteine protease Prp.

The polypeptide is Large ribosomal subunit protein bL27 (Oceanobacillus iheyensis (strain DSM 14371 / CIP 107618 / JCM 11309 / KCTC 3954 / HTE831)).